Here is a 368-residue protein sequence, read N- to C-terminus: Repressor ROX1 (368 aa).

A DNA-binding region (HMG box) is located at residues 10–83 (IPRPKNAFIL…EHERKYPEYK (74 aa)). 2 disordered regions span residues 100 to 121 (IEQQ…QPQL) and 242 to 273 (SSQT…SSVL). The segment covering 102–121 (QQQQQQQKEQQQQKQSQPQL) has biased composition (low complexity).

The protein resides in the nucleus. Its function is as follows. Transcription factor that represses the expression of HEM13, COX5B, ANB1, CYC7 or AAC3 (hypoxic function). Binds to the DNA sequence 5'-RRRTAACAAGAG-3'. The protein is Repressor ROX1 (ROX1) of Saccharomyces cerevisiae (strain ATCC 204508 / S288c) (Baker's yeast).